The primary structure comprises 152 residues: 6,7-dimethyl-8-ribityllumazine synthase (152 aa).

5-amino-6-(D-ribitylamino)uracil-binding positions include Phe24, 56-58 (SFE), and 80-82 (VVV). Position 85–86 (85–86 (ET)) interacts with (2S)-2-hydroxy-3-oxobutyl phosphate. His88 (proton donor) is an active-site residue. A 5-amino-6-(D-ribitylamino)uracil-binding site is contributed by Phe113. Arg127 lines the (2S)-2-hydroxy-3-oxobutyl phosphate pocket.

The protein belongs to the DMRL synthase family.

It catalyses the reaction (2S)-2-hydroxy-3-oxobutyl phosphate + 5-amino-6-(D-ribitylamino)uracil = 6,7-dimethyl-8-(1-D-ribityl)lumazine + phosphate + 2 H2O + H(+). Its pathway is cofactor biosynthesis; riboflavin biosynthesis; riboflavin from 2-hydroxy-3-oxobutyl phosphate and 5-amino-6-(D-ribitylamino)uracil: step 1/2. Catalyzes the formation of 6,7-dimethyl-8-ribityllumazine by condensation of 5-amino-6-(D-ribitylamino)uracil with 3,4-dihydroxy-2-butanone 4-phosphate. This is the penultimate step in the biosynthesis of riboflavin. In Thermococcus onnurineus (strain NA1), this protein is 6,7-dimethyl-8-ribityllumazine synthase.